The primary structure comprises 380 residues: Pregnancy-associated glycoprotein 1 (380 aa).

Positions 1–15 are cleaved as a signal peptide; the sequence is MKWLVLLGLVAFSEC. A propeptide spans 16–53 (activation peptide); the sequence is IVKIPLRRLKTMRNVVSGKNMLNNFLKEHAYSLSQISF. N-linked (GlcNAc...) asparagine glycosylation is found at N57 and N74. The Peptidase A1 domain occupies 71–377; that stretch reads YMGNITIGTP…DRGNDRIGLA (307 aa). D89 is an active-site residue. An intrachain disulfide couples C102 to C107. N-linked (GlcNAc...) asparagine glycans are attached at residues N125 and N182. Cysteines 261 and 265 form a disulfide. D270 is an active-site residue. An intrachain disulfide couples C303 to C337.

This sequence belongs to the peptidase A1 family. In terms of processing, N-Glycosylated; the glycans terminate in either N-acetyl-galactosamine (GalNAc) or N-acetyllactosamine. Terminal GalNAc on Asn-linked glycans is greatly reduced prior to parturition while lactosamine-type N-glycans remain unaltered. In terms of tissue distribution, trophoblast and placental tissue. Produced specifically in the invasive binucleate cells of the placenta. Becomes detectable in maternal serum soon after implantation.

The protein localises to the secreted. It localises to the extracellular space. In terms of biological role, appears to be proteolytically inactive. The sequence is that of Pregnancy-associated glycoprotein 1 from Bos taurus (Bovine).